The following is a 186-amino-acid chain: MDNVNLTDNFLIAMPTLEDPYFSNALVYICEHNENGALGIIVNRPIDMNLASLLEKIDIKLEAENLADMPVYFGGPVQLDRGFVLHRPIGQWQSTLAINSDVGLTSSRDVLSSVGSAGLPAEILVTLGYAGWDAGQLEEELAQNSWLTVPAKASILFDLPPEERLPAAMQKLGISFTQLSDVAGHA.

This sequence belongs to the UPF0301 (AlgH) family.

This chain is UPF0301 protein Daro_3893, found in Dechloromonas aromatica (strain RCB).